A 127-amino-acid polypeptide reads, in one-letter code: Photosystem II extrinsic protein U (127 aa).

A signal peptide spans 1–31 (MSRLFRRLSTLLLCSLLVLGVWLTQPLSVQA).

This sequence belongs to the PsbU family. PSII is composed of 1 copy each of membrane proteins PsbA, PsbB, PsbC, PsbD, PsbE, PsbF, PsbH, PsbI, PsbJ, PsbK, PsbL, PsbM, PsbT, PsbX, PsbY, PsbZ, Psb30/Ycf12, peripheral proteins PsbO, CyanoQ (PsbQ), PsbU, PsbV and a large number of cofactors. It forms dimeric complexes.

The protein resides in the cellular thylakoid membrane. One of the extrinsic, lumenal subunits of photosystem II (PSII). PSII is a light-driven water plastoquinone oxidoreductase, using light energy to abstract electrons from H(2)O, generating a proton gradient subsequently used for ATP formation. The extrinsic proteins stabilize the structure of photosystem II oxygen-evolving complex (OEC), the ion environment of oxygen evolution and protect the OEC against heat-induced inactivation. This chain is Photosystem II extrinsic protein U, found in Synechococcus sp. (strain RCC307).